Consider the following 266-residue polypeptide: Glutamate racemase (266 aa).

Residues 10-11 (DS) and 42-43 (YG) each bind substrate. C73 functions as the Proton donor/acceptor in the catalytic mechanism. A substrate-binding site is contributed by 74–75 (NT). The Proton donor/acceptor role is filled by C183. 184–185 (TH) contacts substrate.

This sequence belongs to the aspartate/glutamate racemases family.

It catalyses the reaction L-glutamate = D-glutamate. The protein operates within cell wall biogenesis; peptidoglycan biosynthesis. In terms of biological role, provides the (R)-glutamate required for cell wall biosynthesis. This is Glutamate racemase from Lactobacillus johnsonii (strain CNCM I-12250 / La1 / NCC 533).